A 185-amino-acid chain; its full sequence is Elongation factor P (185 aa).

The protein belongs to the elongation factor P family.

It is found in the cytoplasm. Its pathway is protein biosynthesis; polypeptide chain elongation. Functionally, involved in peptide bond synthesis. Stimulates efficient translation and peptide-bond synthesis on native or reconstituted 70S ribosomes in vitro. Probably functions indirectly by altering the affinity of the ribosome for aminoacyl-tRNA, thus increasing their reactivity as acceptors for peptidyl transferase. The polypeptide is Elongation factor P (Symbiobacterium thermophilum (strain DSM 24528 / JCM 14929 / IAM 14863 / T)).